A 377-amino-acid chain; its full sequence is DNA primase small subunit PriS (377 aa).

Residues Asp-99, Asp-101, and Asp-274 contribute to the active site.

The protein belongs to the eukaryotic-type primase small subunit family. As to quaternary structure, heterodimer of a small subunit (PriS) and a large subunit (PriL). Requires Mg(2+) as cofactor. Mn(2+) serves as cofactor.

Catalytic subunit of DNA primase, an RNA polymerase that catalyzes the synthesis of short RNA molecules used as primers for DNA polymerase during DNA replication. The small subunit contains the primase catalytic core and has DNA synthesis activity on its own. Binding to the large subunit stabilizes and modulates the activity, increasing the rate of DNA synthesis while decreasing the length of the DNA fragments, and conferring RNA synthesis capability. The DNA polymerase activity may enable DNA primase to also catalyze primer extension after primer synthesis. May also play a role in DNA repair. This Staphylothermus marinus (strain ATCC 43588 / DSM 3639 / JCM 9404 / F1) protein is DNA primase small subunit PriS.